The sequence spans 551 residues: Glucans biosynthesis protein D (551 aa).

Residues 1–32 (MDRRRFIKGSMAMAAVCGTSGIASLFSQAAFA) constitute a signal peptide (tat-type signal).

Belongs to the OpgD/OpgG family. Post-translationally, predicted to be exported by the Tat system. The position of the signal peptide cleavage has not been experimentally proven.

It localises to the periplasm. Its pathway is glycan metabolism; osmoregulated periplasmic glucan (OPG) biosynthesis. In terms of biological role, probably involved in the control of the structural glucose backbone of osmoregulated periplasmic glucans (OPGs). In Escherichia coli O9:H4 (strain HS), this protein is Glucans biosynthesis protein D.